Consider the following 415-residue polypeptide: Tyrosine--tRNA ligase (415 aa).

The 'HIGH' region signature appears at proline 54–histidine 63. The 'KMSKS' region motif lies at lysine 248–serine 252. Lysine 251 is a binding site for ATP. An S4 RNA-binding domain is found at alanine 351–alanine 415.

Belongs to the class-I aminoacyl-tRNA synthetase family. TyrS type 2 subfamily. In terms of assembly, homodimer.

Its subcellular location is the cytoplasm. The catalysed reaction is tRNA(Tyr) + L-tyrosine + ATP = L-tyrosyl-tRNA(Tyr) + AMP + diphosphate + H(+). In terms of biological role, catalyzes the attachment of tyrosine to tRNA(Tyr) in a two-step reaction: tyrosine is first activated by ATP to form Tyr-AMP and then transferred to the acceptor end of tRNA(Tyr). This chain is Tyrosine--tRNA ligase, found in Parasynechococcus marenigrum (strain WH8102).